Here is a 632-residue protein sequence, read N- to C-terminus: tRNA uridine 5-carboxymethylaminomethyl modification enzyme MnmG (632 aa).

FAD is bound by residues 16–21 (GAGHAG), Val-128, and Ser-183. Positions 206–225 (PRVNGNTIDYSKTEEEPGDK) are disordered. A compositionally biased stretch (basic and acidic residues) spans 216-225 (SKTEEEPGDK). 277 to 291 (GPRYCPSIEDKVVRF) contributes to the NAD(+) binding site. Position 374 (Gln-374) interacts with FAD.

The protein belongs to the MnmG family. As to quaternary structure, homodimer. Heterotetramer of two MnmE and two MnmG subunits. Requires FAD as cofactor.

It is found in the cytoplasm. NAD-binding protein involved in the addition of a carboxymethylaminomethyl (cmnm) group at the wobble position (U34) of certain tRNAs, forming tRNA-cmnm(5)s(2)U34. This chain is tRNA uridine 5-carboxymethylaminomethyl modification enzyme MnmG, found in Lactobacillus acidophilus (strain ATCC 700396 / NCK56 / N2 / NCFM).